A 213-amino-acid chain; its full sequence is Carboxysome shell protein CcmP (213 aa).

2 consecutive BMC circularly permuted domains span residues Glu-4–Pro-106 and Lys-107–Ser-211. Positions Glu-69 to Arg-70 match the Probably important for pore gating motif.

It belongs to the EutL/PduB family. In terms of assembly, a dimer of stacked trimers, the same faces interact.

The protein resides in the carboxysome. Probably part of the carboxysome shell, a polyhedral inclusion where RuBisCO (ribulose bisphosphate carboxylase, rbcL-rbcS) is sequestered. It is thought that this protein controls transport of RuBisCO reactants in and out of the carboxysome; residual densities in the 4 X-ray structures suggest that differing compounds bind in interior pockets, depending on the open or closed state of the pore. The protein is Carboxysome shell protein CcmP of Synechococcus elongatus (strain ATCC 33912 / PCC 7942 / FACHB-805) (Anacystis nidulans R2).